The primary structure comprises 80 residues: Large ribosomal subunit protein eL38 (80 aa).

This sequence belongs to the eukaryotic ribosomal protein eL38 family. In terms of assembly, component of the large ribosomal subunit (LSU). Mature N.crassa ribosomes consist of a small (40S) and a large (60S) subunit. The 40S small subunit contains 1 molecule of ribosomal RNA (18S rRNA) and at least 32 different proteins. The large 60S subunit contains 3 rRNA molecules (26S, 5.8S and 5S rRNA) and at least 42 different proteins.

The protein resides in the cytoplasm. Component of the ribosome, a large ribonucleoprotein complex responsible for the synthesis of proteins in the cell. The small ribosomal subunit (SSU) binds messenger RNAs (mRNAs) and translates the encoded message by selecting cognate aminoacyl-transfer RNA (tRNA) molecules. The large subunit (LSU) contains the ribosomal catalytic site termed the peptidyl transferase center (PTC), which catalyzes the formation of peptide bonds, thereby polymerizing the amino acids delivered by tRNAs into a polypeptide chain. The nascent polypeptides leave the ribosome through a tunnel in the LSU and interact with protein factors that function in enzymatic processing, targeting, and the membrane insertion of nascent chains at the exit of the ribosomal tunnel. This is Large ribosomal subunit protein eL38 (rpl-38) from Neurospora crassa (strain ATCC 24698 / 74-OR23-1A / CBS 708.71 / DSM 1257 / FGSC 987).